The primary structure comprises 794 residues: Cadherin-12 (794 aa).

The N-terminal stretch at Met-1–Leu-23 is a signal peptide. Positions Gln-24–Arg-54 are excised as a propeptide. Cadherin domains follow at residues Gly-55–Phe-160, Leu-161–Phe-269, Pro-270–Phe-384, Ser-385–Pro-487, and Glu-488–Pro-609. Topologically, residues Gly-55–Pro-609 are extracellular. Residue Asn-256 is glycosylated (N-linked (GlcNAc...) asparagine). N-linked (GlcNAc...) asparagine glycans are attached at residues Asn-456, Asn-537, and Asn-545. A helical membrane pass occupies residues Val-610–Leu-637. Over Arg-638–Thr-794 the chain is Cytoplasmic. Ser-787 carries the phosphoserine modification.

In terms of tissue distribution, brain.

It localises to the cell membrane. Cadherins are calcium-dependent cell adhesion proteins. They preferentially interact with themselves in a homophilic manner in connecting cells; cadherins may thus contribute to the sorting of heterogeneous cell types. The protein is Cadherin-12 (CDH12) of Homo sapiens (Human).